A 176-amino-acid chain; its full sequence is NAD(P)H-quinone oxidoreductase subunit 6, chloroplastic (176 aa).

Helical transmembrane passes span 10–30 (FLLV…VLLP), 32–52 (PIYS…FYIL), 61–81 (AQLL…VMFM), 92–112 (LWTV…ISLI), and 152–172 (FFLP…GAIA).

The protein belongs to the complex I subunit 6 family. In terms of assembly, NDH is composed of at least 16 different subunits, 5 of which are encoded in the nucleus.

Its subcellular location is the plastid. The protein localises to the chloroplast thylakoid membrane. The catalysed reaction is a plastoquinone + NADH + (n+1) H(+)(in) = a plastoquinol + NAD(+) + n H(+)(out). It catalyses the reaction a plastoquinone + NADPH + (n+1) H(+)(in) = a plastoquinol + NADP(+) + n H(+)(out). NDH shuttles electrons from NAD(P)H:plastoquinone, via FMN and iron-sulfur (Fe-S) centers, to quinones in the photosynthetic chain and possibly in a chloroplast respiratory chain. The immediate electron acceptor for the enzyme in this species is believed to be plastoquinone. Couples the redox reaction to proton translocation, and thus conserves the redox energy in a proton gradient. This chain is NAD(P)H-quinone oxidoreductase subunit 6, chloroplastic (ndhG), found in Atropa belladonna (Belladonna).